The primary structure comprises 290 residues: Lipid phosphate phosphatase 2 (290 aa).

3 consecutive transmembrane segments (helical) span residues W26–H46, W69–I89, and V93–I113. N-linked (GlcNAc...) asparagine glycosylation is present at N142. The next 3 helical transmembrane spans lie at S162 to L182, G193 to V213, and V226 to P246.

The protein belongs to the PA-phosphatase related phosphoesterase family. As to expression, expressed in roots, stems, leaves, buds, flowers and siliques.

It localises to the membrane. PA phosphatase activity not inhibited by N-ethylmaleimide. May play a general 'housekeeping role' in lipid metabolism. Exhibits both diacylglycerol pyrophosphate (DGPP) phosphatase and phosphatidate (PA) phosphatase activities with no preference for either substrate. May play a role downstream of the ABA signaling pathway during seed germination and in stomatal movement in leaves. This is Lipid phosphate phosphatase 2 (LPP2) from Arabidopsis thaliana (Mouse-ear cress).